We begin with the raw amino-acid sequence, 364 residues long: DNA replication and repair protein RecF (364 aa).

30–37 (GKNAQGKT) serves as a coordination point for ATP.

This sequence belongs to the RecF family.

It localises to the cytoplasm. Its function is as follows. The RecF protein is involved in DNA metabolism; it is required for DNA replication and normal SOS inducibility. RecF binds preferentially to single-stranded, linear DNA. It also seems to bind ATP. This is DNA replication and repair protein RecF from Geotalea uraniireducens (strain Rf4) (Geobacter uraniireducens).